Here is an 869-residue protein sequence, read N- to C-terminus: 1-phosphatidylinositol 4,5-bisphosphate phosphodiesterase 1 (869 aa).

The EF-hand domain maps to 269–304 (VSTGQLLEFFQLADINHNGLLNYFEFEKFIKILKNR). Positions 282, 284, 286, and 293 each coordinate Ca(2+). Residues 382-520 (YSKPLNHYFI…LKHKILLKSK (139 aa)) form the PI-PLC X-box domain. Catalysis depends on residues histidine 395 and histidine 439. Substrate-binding residues include lysine 518 and lysine 520. The interval 546–571 (ANEQELRMKDDSTNSSSATNSSSMQR) is disordered. A compositionally biased stretch (low complexity) spans 558 to 568 (TNSSSATNSSS). The PI-PLC Y-box domain maps to 590–709 (ISGIHGIKFR…SGYVLKPKKL (120 aa)). 2 residues coordinate substrate: serine 614 and arginine 643. In terms of domain architecture, C2 spans 713-862 (VTKAKMIPLI…EGEQYIFCTL (150 aa)).

Interacts with SGD1. The cofactor is Ca(2+).

It carries out the reaction a 1,2-diacyl-sn-glycero-3-phospho-(1D-myo-inositol-4,5-bisphosphate) + H2O = 1D-myo-inositol 1,4,5-trisphosphate + a 1,2-diacyl-sn-glycerol + H(+). The production of the second messenger molecules diacylglycerol (DAG) and inositol 1,4,5-trisphosphate (IP3) is mediated by activated phosphatidylinositol-specific phospholipase C enzymes. Required for cell growth, osmoresistance and expression of GPD1. This chain is 1-phosphatidylinositol 4,5-bisphosphate phosphodiesterase 1 (PLC1), found in Saccharomyces cerevisiae (strain ATCC 204508 / S288c) (Baker's yeast).